A 101-amino-acid chain; its full sequence is NAD(P)H-quinone oxidoreductase subunit 4L, chloroplastic (101 aa).

Helical transmembrane passes span 2 to 22, 32 to 52, and 61 to 81; these read MLEHVLVLSAYLFSIGIYGLI, MCLELILNAVNLNFVTFSDFF, and IFSIFVIAIAAAEAAIGPAIV.

The protein belongs to the complex I subunit 4L family. In terms of assembly, NDH is composed of at least 16 different subunits, 5 of which are encoded in the nucleus.

The protein localises to the plastid. It is found in the chloroplast thylakoid membrane. The enzyme catalyses a plastoquinone + NADH + (n+1) H(+)(in) = a plastoquinol + NAD(+) + n H(+)(out). The catalysed reaction is a plastoquinone + NADPH + (n+1) H(+)(in) = a plastoquinol + NADP(+) + n H(+)(out). In terms of biological role, NDH shuttles electrons from NAD(P)H:plastoquinone, via FMN and iron-sulfur (Fe-S) centers, to quinones in the photosynthetic chain and possibly in a chloroplast respiratory chain. The immediate electron acceptor for the enzyme in this species is believed to be plastoquinone. Couples the redox reaction to proton translocation, and thus conserves the redox energy in a proton gradient. The chain is NAD(P)H-quinone oxidoreductase subunit 4L, chloroplastic from Fagopyrum esculentum subsp. ancestrale (Wild buckwheat).